Here is a 153-residue protein sequence, read N- to C-terminus: Ribosome maturation factor RimP (153 aa).

Belongs to the RimP family.

It localises to the cytoplasm. Its function is as follows. Required for maturation of 30S ribosomal subunits. The chain is Ribosome maturation factor RimP from Coxiella burnetii (strain RSA 331 / Henzerling II).